Consider the following 240-residue polypeptide: Probable ATP synthase 24 kDa subunit, mitochondrial (240 aa).

The transit peptide at 1–32 directs the protein to the mitochondrion; the sequence is MAYASRFLSRSKQLQGGLVILQQQHAIPVRAF. 2 stretches are compositionally biased toward basic and acidic residues: residues 210–222 and 229–240; these read AVEA…KKEE and PDVKSLDIRNFI. The tract at residues 210 to 240 is disordered; that stretch reads AVEAMESQKKKEEFQDEEMPDVKSLDIRNFI.

It localises to the mitochondrion. The protein resides in the mitochondrion inner membrane. Its function is as follows. Mitochondrial membrane ATP synthase (F(1)F(0) ATP synthase or Complex V) produces ATP from ADP in the presence of a proton gradient across the membrane which is generated by electron transport complexes of the respiratory chain. F-type ATPases consist of two structural domains, F(1) - containing the extramembraneous catalytic core and F(0) - containing the membrane proton channel, linked together by a central stalk and a peripheral stalk. During catalysis, ATP synthesis in the catalytic domain of F(1) is coupled via a rotary mechanism of the central stalk subunits to proton translocation. Part of the complex F(0) domain. The chain is Probable ATP synthase 24 kDa subunit, mitochondrial from Arabidopsis thaliana (Mouse-ear cress).